The sequence spans 304 residues: Aspartate carbamoyltransferase catalytic subunit (304 aa).

Positions 57 and 58 each coordinate carbamoyl phosphate. Lysine 86 provides a ligand contact to L-aspartate. Arginine 107, histidine 135, and glutamine 138 together coordinate carbamoyl phosphate. L-aspartate is bound by residues arginine 168 and arginine 229. Residues leucine 266 and proline 267 each coordinate carbamoyl phosphate.

This sequence belongs to the aspartate/ornithine carbamoyltransferase superfamily. ATCase family. As to quaternary structure, heterooligomer of catalytic and regulatory chains.

It carries out the reaction carbamoyl phosphate + L-aspartate = N-carbamoyl-L-aspartate + phosphate + H(+). The protein operates within pyrimidine metabolism; UMP biosynthesis via de novo pathway; (S)-dihydroorotate from bicarbonate: step 2/3. Functionally, catalyzes the condensation of carbamoyl phosphate and aspartate to form carbamoyl aspartate and inorganic phosphate, the committed step in the de novo pyrimidine nucleotide biosynthesis pathway. The polypeptide is Aspartate carbamoyltransferase catalytic subunit (Methanosphaera stadtmanae (strain ATCC 43021 / DSM 3091 / JCM 11832 / MCB-3)).